Here is a 289-residue protein sequence, read N- to C-terminus: Trihelix transcription factor GT-3b (289 aa).

One can recognise a Myb-like domain in the interval 42-98; it reads WSVEETKELIGIRGELDQTFMETKRNKLLWEVISNKMRDKSFPRSPEQCKCKWKNLV. The Bipartite nuclear localization signal motif lies at 65–81; it reads KRNKLLWEVISNKMRDK. The tract at residues 137 to 200 is disordered; the sequence is ESEGGGGGTS…SNSSNSNNGV (64 aa). A compositionally biased stretch (acidic residues) spans 156 to 168; the sequence is SDEEEENVNEELV. The Nuclear localization signal motif lies at 179 to 188; the sequence is PKKNIAKKRK. The span at 190 to 199 shows a compositional bias: low complexity; it reads GSNSSNSNNG. Residues 223–275 adopt a coiled-coil conformation; sequence EAREKERAEKEEEWRRKMEELEKERLAMERMWRDREEQRRSREEMRAEKRDSL.

Heterodimer with GT-3A. Associated with the mediator complex.

It localises to the nucleus. Probable transcription factor that may play a role in the induction of CAM4 in response to pathogen and salt. In Arabidopsis thaliana (Mouse-ear cress), this protein is Trihelix transcription factor GT-3b (GT-3B).